Consider the following 301-residue polypeptide: tRNA U34 carboxymethyltransferase (301 aa).

Residues K70, W84, K89, G108, 130–132, 157–158, Y177, and R292 contribute to the carboxy-S-adenosyl-L-methionine site; these read DPS and VE.

It belongs to the class I-like SAM-binding methyltransferase superfamily. CmoB family. In terms of assembly, homotetramer.

The catalysed reaction is carboxy-S-adenosyl-L-methionine + 5-hydroxyuridine(34) in tRNA = 5-carboxymethoxyuridine(34) in tRNA + S-adenosyl-L-homocysteine + H(+). Functionally, catalyzes carboxymethyl transfer from carboxy-S-adenosyl-L-methionine (Cx-SAM) to 5-hydroxyuridine (ho5U) to form 5-carboxymethoxyuridine (cmo5U) at position 34 in tRNAs. This is tRNA U34 carboxymethyltransferase from Sulfurovum sp. (strain NBC37-1).